Consider the following 1286-residue polypeptide: ABC transporter B family member 1 (1286 aa).

Transmembrane regions (helical) follow at residues 42-62 and 93-113; these read VLMG…PLFL and FLVV…CWMW. An ABC transmembrane type-1 1 domain is found at 44-333; that stretch reads MGIGSVGAFV…SAPSMAAFAK (290 aa). Position 139 (D139) interacts with ATP. 2 consecutive transmembrane segments (helical) span residues 166–186 and 187–207; these read LGNF…GFTA and VWQL…IGGI. A glycan (N-linked (GlcNAc...) asparagine) is linked at N217. Transmembrane regions (helical) follow at residues 277 to 297 and 301 to 321; these read ATYF…GYLV and LTNG…GLAL. Y286 contacts brassinolide. In terms of domain architecture, ABC transporter 1 spans 368-604; the sequence is VELKNVDFSY…GENGVYAKLI (237 aa). Positions 377, 379, 380, 408, 409, 410, and 411 each coordinate ATP. A disordered region spans residues 614 to 647; the sequence is AMSNARKSSARPSSARNSVSSPIMTRNSSYGRSP. The segment covering 616–635 has biased composition (low complexity); that stretch reads SNARKSSARPSSARNSVSSP. An N-linked (GlcNAc...) asparagine glycan is attached at N640. In terms of domain architecture, ABC transmembrane type-1 2 spans 700-988; that stretch reads ALLGSVGSVI…TLTLAPDFIK (289 aa). 2 consecutive transmembrane segments (helical) span residues 705–725 and 745–765; these read VGSV…SAVL and YLLI…HSFW. N771 carries an N-linked (GlcNAc...) asparagine glycan. D793 contributes to the ATP binding site. N797 carries an N-linked (GlcNAc...) asparagine glycan. A run of 4 helical transmembrane segments spans residues 821–843, 845–867, 932–952, and 967–987; these read ISVI…VLQW, LALV…KMFM, VAQF…SWLV, and MVLM…PDFI. 2 residues coordinate brassinolide: Y941 and E978. The ABC transporter 2 domain maps to 1024 to 1260; it reads VELKHIDFSY…HPDGIYARMI (237 aa). 5 residues coordinate ATP: Y1033, R1036, G1064, K1065, and S1066. Positions 1049–1286 are interaction with FKBP42/TWD1; the sequence is ARAGKTLALV…SSSRVKEDDA (238 aa).

This sequence belongs to the ABC transporter superfamily. ABCB family. Multidrug resistance exporter (TC 3.A.1.201) subfamily. As to quaternary structure, interacts with 1-naphthylphthalamic acid (NPA) and FKBP42/TWD1. Ubiquitous, with high levels in peduncles. Mostly localized in young developing tissues, including meristems, as well as root and shoot apices.

The protein resides in the cell membrane. It carries out the reaction (indol-3-yl)acetate(in) + ATP + H2O = (indol-3-yl)acetate(out) + ADP + phosphate + H(+). It catalyses the reaction brassinolide(in) + ATP + H2O = brassinolide(out) + ADP + phosphate + H(+). The catalysed reaction is 24-epi-brassinolide(in) + ATP + H2O = 24-epi-brassinolide(out) + ADP + phosphate + H(+). The enzyme catalyses 24-epi-castasterone(in) + ATP + H2O = 24-epi-castasterone(out) + ADP + phosphate + H(+). It carries out the reaction castasterone(in) + ATP + H2O = castasterone(out) + ADP + phosphate + H(+). Transport capacity is stimulated by the chaperone protein FKBP42/TWD1. Transport activity inhibited by 1-N-naphthylphthalamic acid (NPA), cyclopropyl propane dione (CPD), cyclosporin A, verapamil and quercetin. ATPase activity is specifically activated by bioactive brassinosteroids in a dose-dependent manner, including brassinolide (BL), 24-epiBL, 24-epicastasterone (24-epiCS) and castasterone-alkyne; BL binding leads to structural changes. Inhibited by vanadate. Its function is as follows. Brassinosteroid exporter that, in conjunction with ABCB19, supports the accumulation of exogenous brassinosteroids (BR) in the apoplast, thus promoting BR signaling initiation involving the specific receptor BRI1 and required for plant growth and stress responses. Auxin efflux transporter that acts as a negative regulator of light signaling to promote hypocotyl elongation. May contribute to the regulation of leaf position and morphology during PHOT1-mediated blue light responses involving auxin distribution, especially in low light fluence. Together with ABCB19 and in a FKBP42/TWD1-dependent manner, supports seed development by promoting stamen elongation and, to a lesser extent, anther dehiscence and pollen maturation, probably as auxin transporters. Mediates the accumulation of chlorophyll and anthocyanin, as well as the expression of genes in response to light. Participates directly in auxin efflux and thus regulates the polar (presumably basipetal) auxin transport (from root tips to root elongating zone). Also transports some auxin metabolites such as oxindoleacetic acid and indoleacetaldehyde. Involved in diverse auxin-mediated responses including gravitropism, phototropism and lateral root formation. Confers resistance to herbicides such as dicamba, pendimethalin, oryzalin, and monosodium acid methanearsonate (MSMA), but not to herbicides such as glyphosate, atrazine, bentazon and fluazifop-p-butyl. Also mediates resistance to xenobiotics such as cycloheximide and the cytokinin N6-(2-isopentenyl)adenine (2IP). The protein is ABC transporter B family member 1 of Arabidopsis thaliana (Mouse-ear cress).